Here is a 367-residue protein sequence, read N- to C-terminus: Pepsin A (367 aa).

A propeptide spans 1–42 (SIHRVPLKKGKSLRKQLKDHGLLEDFLKKHPYNPASKYHPVL) (activation peptide). Positions 59 to 364 (YYGTISIGTP…DRANNKVGLS (306 aa)) constitute a Peptidase A1 domain. The active site involves aspartate 77. A disulfide bridge connects residues cysteine 90 and cysteine 95. N-linked (GlcNAc...) asparagine glycosylation occurs at asparagine 113. A disulfide bridge connects residues cysteine 251 and cysteine 255. The active site involves aspartate 260. The cysteines at positions 290 and 323 are disulfide-linked.

This sequence belongs to the peptidase A1 family.

It carries out the reaction Preferential cleavage: hydrophobic, preferably aromatic, residues in P1 and P1' positions. Cleaves 1-Phe-|-Val-2, 4-Gln-|-His-5, 13-Glu-|-Ala-14, 14-Ala-|-Leu-15, 15-Leu-|-Tyr-16, 16-Tyr-|-Leu-17, 23-Gly-|-Phe-24, 24-Phe-|-Phe-25 and 25-Phe-|-Tyr-26 bonds in the B chain of insulin.. In terms of biological role, shows particularly broad specificity; although bonds involving phenylalanine and leucine are preferred, many others are also cleaved to some extent. The protein is Pepsin A (PGA) of Gallus gallus (Chicken).